An 828-amino-acid polypeptide reads, in one-letter code: Putative alpha-1,3-mannosyltransferase MNN12 (828 aa).

Residues 1–13 (MIEKLTIKRSRQK) are Cytoplasmic-facing. A helical membrane pass occupies residues 14-34 (VIAYSVIIIWLMIVNIWLLNN). Residues 35–828 (YHLNSSTLTR…YYGDVWVGME (794 aa)) lie on the Lumenal side of the membrane. Asn-38 carries N-linked (GlcNAc...) asparagine glycosylation. The disordered stretch occupies residues 80 to 104 (HQEEDVPNSQSTDNSLIKPTSPAKN). The segment covering 86–103 (PNSQSTDNSLIKPTSPAK) has biased composition (polar residues). N-linked (GlcNAc...) asparagine glycans are attached at residues Asn-247, Asn-437, and Asn-591.

Belongs to the MNN1/MNT family.

The protein localises to the golgi apparatus membrane. It functions in the pathway protein modification; protein glycosylation. In terms of biological role, responsible for addition of the terminal mannose residues to the outer chain of core N-linked polysaccharides and to O-linked mannotriose. Implicated in late Golgi modifications. In Candida albicans (strain SC5314 / ATCC MYA-2876) (Yeast), this protein is Putative alpha-1,3-mannosyltransferase MNN12 (MNN12).